The sequence spans 216 residues: Imidazole glycerol phosphate synthase subunit HisH (216 aa).

The Glutamine amidotransferase type-1 domain occupies 2 to 216; the sequence is RVAIIDYGSG…LIANFLKWKP (215 aa). The Nucleophile role is filled by cysteine 88. Catalysis depends on residues histidine 196 and glutamate 198.

In terms of assembly, heterodimer of HisH and HisF.

Its subcellular location is the cytoplasm. It catalyses the reaction 5-[(5-phospho-1-deoxy-D-ribulos-1-ylimino)methylamino]-1-(5-phospho-beta-D-ribosyl)imidazole-4-carboxamide + L-glutamine = D-erythro-1-(imidazol-4-yl)glycerol 3-phosphate + 5-amino-1-(5-phospho-beta-D-ribosyl)imidazole-4-carboxamide + L-glutamate + H(+). The enzyme catalyses L-glutamine + H2O = L-glutamate + NH4(+). It functions in the pathway amino-acid biosynthesis; L-histidine biosynthesis; L-histidine from 5-phospho-alpha-D-ribose 1-diphosphate: step 5/9. Its function is as follows. IGPS catalyzes the conversion of PRFAR and glutamine to IGP, AICAR and glutamate. The HisH subunit catalyzes the hydrolysis of glutamine to glutamate and ammonia as part of the synthesis of IGP and AICAR. The resulting ammonia molecule is channeled to the active site of HisF. The polypeptide is Imidazole glycerol phosphate synthase subunit HisH (Brucella suis biovar 1 (strain 1330)).